Consider the following 396-residue polypeptide: Mevalonate kinase (396 aa).

Residues lysine 13, asparagine 55, serine 135, and 140-146 (GAGLGSS) contribute to the ATP site. The Proton donor role is filled by serine 146. The Mg(2+) site is built by serine 146 and glutamate 193. Catalysis depends on aspartate 204, which acts as the Proton acceptor.

This sequence belongs to the GHMP kinase family. Mevalonate kinase subfamily. In terms of assembly, homodimer. Mg(2+) is required as a cofactor.

The protein resides in the cytoplasm. The protein localises to the peroxisome. The catalysed reaction is (R)-mevalonate + ATP = (R)-5-phosphomevalonate + ADP + H(+). The protein operates within isoprenoid biosynthesis; isopentenyl diphosphate biosynthesis via mevalonate pathway; isopentenyl diphosphate from (R)-mevalonate: step 1/3. Its activity is regulated as follows. Farnesyl pyrophosphate and geranyl pyrophosphate inhibit mevalonate kinase activity by binding competitively at the ATP-binding sites. Catalyzes the phosphorylation of mevalonate to mevalonate 5-phosphate, a key step in isoprenoid and cholesterol biosynthesis. The protein is Mevalonate kinase of Homo sapiens (Human).